Reading from the N-terminus, the 706-residue chain is Signal transducer and activator of transcription 1 (706 aa).

Positions 477-574 (WCIGFISKND…EEMLRFFESE (98 aa)) constitute an SH2 domain.

This sequence belongs to the transcription factor STAT family. In terms of assembly, forms a homodimer or a heterodimer with a related family member. Expressed in adult and larval pharynx, head ganglia, tail ganglia, ventral nerve cord and body muscles.

Its subcellular location is the cytoplasm. It localises to the nucleus. Functionally, carries out a dual function: signal transduction and activation of transcription. Activated STAT proteins play a role in repression of dauer formation. Neuronal expression is held in check by negative signals through the TGF-beta pathway that target the daf-3 transcription factor. This is Signal transducer and activator of transcription 1 from Caenorhabditis elegans.